Here is a 152-residue protein sequence, read N- to C-terminus: MPAHSLVMSSPALPAFLLCSTLLVIKMYVVAIITGQVRLRKKAFANPEDALRHGGPQYCRSDPDVERCLRAHRNDMETIYPFLFLGFVYSFLGPNPFVAWMHFLVFLVGRVAHTVAYLGKLRAPIRSVTYTLAQLPCASMALQILWEAARHL.

The Lumenal portion of the chain corresponds to 1–12; sequence MPAHSLVMSSPA. Residues 13 to 41 traverse the membrane as a helical segment; that stretch reads LPAFLLCSTLLVIKMYVVAIITGQVRLRK. Position 38 (arginine 38) interacts with glutathione. At 42-60 the chain is on the cytoplasmic side; the sequence is KAFANPEDALRHGGPQYCR. A helical membrane pass occupies residues 61 to 90; sequence SDPDVERCLRAHRNDMETIYPFLFLGFVYS. 73-77 is a binding site for glutathione; the sequence is RNDME. At 91–95 the chain is on the lumenal side; the sequence is FLGPN. Residues 96–119 traverse the membrane as a helical segment; the sequence is PFVAWMHFLVFLVGRVAHTVAYLG. 2 residues coordinate glutathione: histidine 113 and tyrosine 117. The Cytoplasmic segment spans residues 120-123; that stretch reads KLRA. A helical membrane pass occupies residues 124–152; that stretch reads PIRSVTYTLAQLPCASMALQILWEAARHL. 126–130 serves as a coordination point for glutathione; that stretch reads RSVTY.

The protein belongs to the MAPEG family. In terms of assembly, homotrimer. Requires glutathione as cofactor.

It localises to the membrane. It is found in the cytoplasm. Its subcellular location is the perinuclear region. It catalyses the reaction prostaglandin H2 = prostaglandin E2. It carries out the reaction 2-glyceryl-prostaglandin H2 = 2-glyceryl-prostaglandin E2. The catalysed reaction is prostaglandin G2 = (15S)-15-hydroperoxy-prostaglandin E2. The enzyme catalyses 1-chloro-2,4-dinitrobenzene + glutathione = 2,4-dinitrophenyl-S-glutathione + chloride + H(+). It catalyses the reaction (5S)-hydroperoxy-(6E,8Z,11Z,14Z)-eicosatetraenoate + 2 glutathione = (5S)-hydroxy-(6E,8Z,11Z,14Z)-eicosatetraenoate + glutathione disulfide + H2O. It participates in lipid metabolism; prostaglandin biosynthesis. Induced by interleukin IL1B. Its function is as follows. Terminal enzyme of the cyclooxygenase (COX)-2-mediated prostaglandin E2 (PGE2) biosynthetic pathway. Catalyzes the glutathione-dependent oxidoreduction of prostaglandin endoperoxide H2 (PGH2) to prostaglandin E2 (PGE2) in response to inflammatory stimuli. Plays a key role in inflammation response, fever and pain. Also catalyzes the oxidoreduction of endocannabinoids into prostaglandin glycerol esters and PGG2 into 15-hydroperoxy-PGE2. In addition, displays low glutathione transferase and glutathione-dependent peroxidase activities, toward 1-chloro-2,4-dinitrobenzene and 5-hydroperoxyicosatetraenoic acid (5-HPETE), respectively. The protein is Prostaglandin E synthase (PTGES) of Homo sapiens (Human).